We begin with the raw amino-acid sequence, 552 residues long: HTH-type transcriptional regulator SgrR (552 aa).

An HTH marR-type domain is found at 1–116 (MPSGRLQQQF…LISHLGRSFR (116 aa)). Positions 26-49 (LNELADLLNCSRRHMRTLLNTMQA) form a DNA-binding region, H-T-H motif. The tract at residues 163–493 (ELEADIAHHW…RDWQDDAAQW (331 aa)) is solute-binding.

Functionally, activates the small RNA gene sgrS under glucose-phosphate stress conditions as well as yfdZ. Represses its own transcription under both stress and non-stress conditions. Might act as a sensor of the intracellular accumulation of phosphoglucose by binding these molecules in its C-terminal solute-binding domain. This is HTH-type transcriptional regulator SgrR from Salmonella typhi.